The following is a 34-amino-acid chain: Photosystem II reaction center protein Psb30 (34 aa).

A helical membrane pass occupies residues 9 to 29; that stretch reads QLIATGTIMLAGPAVIVLLAL.

The protein belongs to the Psb30/Ycf12 family. As to quaternary structure, PSII is composed of 1 copy each of membrane proteins PsbA, PsbB, PsbC, PsbD, PsbE, PsbF, PsbH, PsbI, PsbJ, PsbK, PsbL, PsbM, PsbT, PsbX, PsbY, PsbZ, Psb30/Ycf12, peripheral proteins of the oxygen-evolving complex and a large number of cofactors. It forms dimeric complexes.

It localises to the plastid. The protein resides in the chloroplast thylakoid membrane. A core subunit of photosystem II (PSII), probably helps stabilize the reaction center. The polypeptide is Photosystem II reaction center protein Psb30 (Phaeodactylum tricornutum (strain CCAP 1055/1)).